The chain runs to 253 residues: 5-oxoprolinase subunit A (253 aa).

It belongs to the LamB/PxpA family. As to quaternary structure, forms a complex composed of PxpA, PxpB and PxpC.

The catalysed reaction is 5-oxo-L-proline + ATP + 2 H2O = L-glutamate + ADP + phosphate + H(+). Catalyzes the cleavage of 5-oxoproline to form L-glutamate coupled to the hydrolysis of ATP to ADP and inorganic phosphate. This is 5-oxoprolinase subunit A from Bacillus cereus (strain Q1).